The primary structure comprises 488 residues: N-succinylglutamate 5-semialdehyde dehydrogenase 2 (488 aa).

NAD(+) is bound at residue 221-226 (GSSNTG). Residues E244 and C278 contribute to the active site.

The protein belongs to the aldehyde dehydrogenase family. AstD subfamily.

It catalyses the reaction N-succinyl-L-glutamate 5-semialdehyde + NAD(+) + H2O = N-succinyl-L-glutamate + NADH + 2 H(+). It participates in amino-acid degradation; L-arginine degradation via AST pathway; L-glutamate and succinate from L-arginine: step 4/5. Catalyzes the NAD-dependent reduction of succinylglutamate semialdehyde into succinylglutamate. This Pseudoalteromonas translucida (strain TAC 125) protein is N-succinylglutamate 5-semialdehyde dehydrogenase 2.